A 417-amino-acid chain; its full sequence is Serine hydroxymethyltransferase 1 (417 aa).

(6S)-5,6,7,8-tetrahydrofolate contacts are provided by residues leucine 121 and 125-127 (GHL). Lysine 229 carries the N6-(pyridoxal phosphate)lysine modification. 355–357 (SPF) is a (6S)-5,6,7,8-tetrahydrofolate binding site.

This sequence belongs to the SHMT family. As to quaternary structure, homodimer. Pyridoxal 5'-phosphate is required as a cofactor.

The protein resides in the cytoplasm. It catalyses the reaction (6R)-5,10-methylene-5,6,7,8-tetrahydrofolate + glycine + H2O = (6S)-5,6,7,8-tetrahydrofolate + L-serine. It participates in one-carbon metabolism; tetrahydrofolate interconversion. It functions in the pathway amino-acid biosynthesis; glycine biosynthesis; glycine from L-serine: step 1/1. Functionally, catalyzes the reversible interconversion of serine and glycine with tetrahydrofolate (THF) serving as the one-carbon carrier. This reaction serves as the major source of one-carbon groups required for the biosynthesis of purines, thymidylate, methionine, and other important biomolecules. Also exhibits THF-independent aldolase activity toward beta-hydroxyamino acids, producing glycine and aldehydes, via a retro-aldol mechanism. This Pectobacterium atrosepticum (strain SCRI 1043 / ATCC BAA-672) (Erwinia carotovora subsp. atroseptica) protein is Serine hydroxymethyltransferase 1.